The primary structure comprises 304 residues: Protoheme IX farnesyltransferase (304 aa).

9 helical membrane-spanning segments follow: residues 32-52 (VVAL…PGSV), 54-74 (LQPL…AAAF), 104-124 (ALTF…TLVN), 126-146 (LTAW…TAYL), 154-174 (IVVG…SVTG), 180-200 (ALLL…ALAI), 226-246 (CILL…LVGM), 247-267 (CGPV…YKAW), and 284-304 (FSIY…YLWV).

It belongs to the UbiA prenyltransferase family. Protoheme IX farnesyltransferase subfamily.

The protein localises to the cell inner membrane. The enzyme catalyses heme b + (2E,6E)-farnesyl diphosphate + H2O = Fe(II)-heme o + diphosphate. It participates in porphyrin-containing compound metabolism; heme O biosynthesis; heme O from protoheme: step 1/1. In terms of biological role, converts heme B (protoheme IX) to heme O by substitution of the vinyl group on carbon 2 of heme B porphyrin ring with a hydroxyethyl farnesyl side group. The protein is Protoheme IX farnesyltransferase of Shewanella sediminis (strain HAW-EB3).